Consider the following 343-residue polypeptide: uncharacterized protein (343 aa).

This is an uncharacterized protein from Tortricidae (ClGV).